We begin with the raw amino-acid sequence, 393 residues long: Dual specificity mitogen-activated protein kinase kinase 1 (393 aa).

Residues 1–27 are disordered; the sequence is MPKKKPTPIQLNPAPDGSAVNGTSSAE. One can recognise a Protein kinase domain in the interval 68-361; the sequence is FEKISELGAG…LKQLMVHAFI (294 aa). ATP contacts are provided by residues 74-82 and Lys-97; that span reads LGAGNGGVV. Asp-190 functions as the Proton acceptor in the catalytic mechanism. Ser-218 and Ser-222 each carry phosphoserine; by RAF. An RAF1-binding region spans residues 270 to 307; the sequence is ELELLFGCQVEGDAAETPPRPRTPGRPLSSYGMDSRPP. Position 286 is a phosphothreonine (Thr-286). Thr-292 is modified (phosphothreonine; by MAPK1). Position 298 is a phosphoserine; by PAK (Ser-298).

This sequence belongs to the protein kinase superfamily. STE Ser/Thr protein kinase family. MAP kinase kinase subfamily. Found in a complex with at least BRAF, HRAS, MAP2K1, MAPK3/ERK1 and RGS14. Forms a heterodimer with MAP2K2/MEK2. Forms heterodimers with KSR2 which further dimerize to form tetramers. Interacts with KSR1 or KSR2 and BRAF; the interaction with KSR1 or KSR2 mediates KSR1-BRAF or KSR2-BRAF dimerization. Interacts with ARBB2, LAMTOR3, MAPK1/ERK2 and RAF1. Interacts with MAPK1/ERK2. Interacts with MORG1. Interacts with PPARG. Interacts with VRK2. Interacts with SGK1. Interacts with BIRC6/bruce. Interacts with KAT7; the interaction promotes KAT7 phosphorylation. Interacts with RAF1 and NEK10; the interaction is required for ERK1/2-signaling pathway activation in response to UV irradiation. Interacts with TRAF3IP3. Interacts with MOS. Phosphorylation at Ser-218 and Ser-222 by MAP kinase kinase kinases (BRAF or MEKK1) positively regulates kinase activity. Also phosphorylated at Thr-292 by MAPK1/ERK2 and at Ser-298 by PAK. MAPK1/ERK2 phosphorylation of Thr-292 occurs in response to cellular adhesion and leads to inhibition of Ser-298 phosphorylation by PAK. Autophosphorylated at Ser-218 and Ser-222, autophosphosphorylation is promoted by NEK10 following UV irradiation.

Its subcellular location is the cytoplasm. The protein localises to the cytoskeleton. It is found in the microtubule organizing center. The protein resides in the centrosome. It localises to the spindle pole body. Its subcellular location is the nucleus. The protein localises to the membrane. The enzyme catalyses L-seryl-[protein] + ATP = O-phospho-L-seryl-[protein] + ADP + H(+). It catalyses the reaction L-threonyl-[protein] + ATP = O-phospho-L-threonyl-[protein] + ADP + H(+). It carries out the reaction L-tyrosyl-[protein] + ATP = O-phospho-L-tyrosyl-[protein] + ADP + H(+). Its activity is regulated as follows. Ras proteins such as HRAS mediate the activation of RAF proteins such as RAF1 or BRAF which in turn activate extracellular signal-regulated kinases (ERK) through MAPK (mitogen-activated protein kinases) and ERK kinases MAP2K1/MEK1 and MAP2K2/MEK2. Activation occurs through phosphorylation of Ser-218 and Ser-222. MAP2K1/MEK1 binds KSR1 or KSR2 releasing the inhibitory intramolecular interaction between KSR1 or KSR2 protein kinase and N-terminal domains. This allows KSR1 or KSR2 dimerization with BRAF leading to BRAF activation and phosphorylation of MAP2K1. MAP2K1/MEK1 is also the target of negative feed-back regulation by its substrate kinases, such as MAPK1/ERK2. These phosphorylate MAP2K1/MEK1 on Thr-292, thereby facilitating dephosphorylation of the activating residues Ser-218 and Ser-222. Inhibited by serine/threonine phosphatase 2A. In terms of biological role, dual specificity protein kinase which acts as an essential component of the MAP kinase signal transduction pathway. Binding of extracellular ligands such as growth factors, cytokines and hormones to their cell-surface receptors activates RAS and this initiates RAF1 activation. RAF1 then further activates the dual-specificity protein kinases MAP2K1/MEK1 and MAP2K2/MEK2. Both MAP2K1/MEK1 and MAP2K2/MEK2 function specifically in the MAPK/ERK cascade, and catalyze the concomitant phosphorylation of a threonine and a tyrosine residue in a Thr-Glu-Tyr sequence located in the extracellular signal-regulated kinases MAPK3/ERK1 and MAPK1/ERK2, leading to their activation and further transduction of the signal within the MAPK/ERK cascade. Activates BRAF in a KSR1 or KSR2-dependent manner; by binding to KSR1 or KSR2 releases the inhibitory intramolecular interaction between KSR1 or KSR2 protein kinase and N-terminal domains which promotes KSR1 or KSR2-BRAF dimerization and BRAF activation. Depending on the cellular context, this pathway mediates diverse biological functions such as cell growth, adhesion, survival and differentiation, predominantly through the regulation of transcription, metabolism and cytoskeletal rearrangements. One target of the MAPK/ERK cascade is peroxisome proliferator-activated receptor gamma (PPARG), a nuclear receptor that promotes differentiation and apoptosis. MAP2K1/MEK1 has been shown to export PPARG from the nucleus. The MAPK/ERK cascade is also involved in the regulation of endosomal dynamics, including lysosome processing and endosome cycling through the perinuclear recycling compartment (PNRC), as well as in the fragmentation of the Golgi apparatus during mitosis. The sequence is that of Dual specificity mitogen-activated protein kinase kinase 1 from Rattus norvegicus (Rat).